A 277-amino-acid polypeptide reads, in one-letter code: Phosphonoacetaldehyde hydrolase (277 aa).

The Nucleophile role is filled by D20. Mg(2+)-binding residues include D20 and A22. The active-site Schiff-base intermediate with substrate is K61. D194 lines the Mg(2+) pocket.

The protein belongs to the HAD-like hydrolase superfamily. PhnX family. As to quaternary structure, homodimer. Mg(2+) is required as a cofactor.

It carries out the reaction phosphonoacetaldehyde + H2O = acetaldehyde + phosphate + H(+). Its function is as follows. Involved in phosphonate degradation. The polypeptide is Phosphonoacetaldehyde hydrolase (Syntrophobacter fumaroxidans (strain DSM 10017 / MPOB)).